The primary structure comprises 410 residues: Arginine deiminase (410 aa).

The active-site Amidino-cysteine intermediate is C398.

Belongs to the arginine deiminase family. In terms of assembly, homodimer.

The protein resides in the cytoplasm. It carries out the reaction L-arginine + H2O = L-citrulline + NH4(+). Its pathway is amino-acid degradation; L-arginine degradation via ADI pathway; carbamoyl phosphate from L-arginine: step 1/2. The polypeptide is Arginine deiminase (arcA) (Mycoplasmopsis arginini (Mycoplasma arginini)).